The sequence spans 163 residues: Phosphopantetheine adenylyltransferase (163 aa).

T11 contacts substrate. ATP is bound by residues 11 to 12 (TF) and H19. The substrate site is built by K43, L75, and R89. Residues 90-92 (GLR), E100, and 125-131 (YMFISAT) contribute to the ATP site.

Belongs to the bacterial CoaD family. Homohexamer. Requires Mg(2+) as cofactor.

It localises to the cytoplasm. It carries out the reaction (R)-4'-phosphopantetheine + ATP + H(+) = 3'-dephospho-CoA + diphosphate. The protein operates within cofactor biosynthesis; coenzyme A biosynthesis; CoA from (R)-pantothenate: step 4/5. Its function is as follows. Reversibly transfers an adenylyl group from ATP to 4'-phosphopantetheine, yielding dephospho-CoA (dPCoA) and pyrophosphate. The protein is Phosphopantetheine adenylyltransferase of Aromatoleum aromaticum (strain DSM 19018 / LMG 30748 / EbN1) (Azoarcus sp. (strain EbN1)).